The sequence spans 153 residues: SsrA-binding protein (153 aa).

Belongs to the SmpB family.

Its subcellular location is the cytoplasm. In terms of biological role, required for rescue of stalled ribosomes mediated by trans-translation. Binds to transfer-messenger RNA (tmRNA), required for stable association of tmRNA with ribosomes. tmRNA and SmpB together mimic tRNA shape, replacing the anticodon stem-loop with SmpB. tmRNA is encoded by the ssrA gene; the 2 termini fold to resemble tRNA(Ala) and it encodes a 'tag peptide', a short internal open reading frame. During trans-translation Ala-aminoacylated tmRNA acts like a tRNA, entering the A-site of stalled ribosomes, displacing the stalled mRNA. The ribosome then switches to translate the ORF on the tmRNA; the nascent peptide is terminated with the 'tag peptide' encoded by the tmRNA and targeted for degradation. The ribosome is freed to recommence translation, which seems to be the essential function of trans-translation. The polypeptide is SsrA-binding protein (Sulfurovum sp. (strain NBC37-1)).